The following is a 386-amino-acid chain: Succinate--CoA ligase [ADP-forming] subunit beta (386 aa).

The 236-residue stretch at 9-244 folds into the ATP-grasp domain; it reads KEILRSYGVS…LDEEDPKEVE (236 aa). ATP is bound by residues Lys46, 53-55, Glu99, Cys102, and Glu107; that span reads GRG. Mg(2+)-binding residues include Asn199 and Asp213. Substrate contacts are provided by residues Asn264 and 321–323; that span reads GIM.

This sequence belongs to the succinate/malate CoA ligase beta subunit family. Heterotetramer of two alpha and two beta subunits. Mg(2+) serves as cofactor.

The catalysed reaction is succinate + ATP + CoA = succinyl-CoA + ADP + phosphate. It carries out the reaction GTP + succinate + CoA = succinyl-CoA + GDP + phosphate. Its pathway is carbohydrate metabolism; tricarboxylic acid cycle; succinate from succinyl-CoA (ligase route): step 1/1. In terms of biological role, succinyl-CoA synthetase functions in the citric acid cycle (TCA), coupling the hydrolysis of succinyl-CoA to the synthesis of either ATP or GTP and thus represents the only step of substrate-level phosphorylation in the TCA. The beta subunit provides nucleotide specificity of the enzyme and binds the substrate succinate, while the binding sites for coenzyme A and phosphate are found in the alpha subunit. The protein is Succinate--CoA ligase [ADP-forming] subunit beta of Geobacillus thermodenitrificans (strain NG80-2).